We begin with the raw amino-acid sequence, 504 residues long: Glycerol kinase (504 aa).

ADP is bound at residue threonine 16. ATP contacts are provided by threonine 16 and threonine 17. Threonine 16 serves as a coordination point for sn-glycerol 3-phosphate. ADP is bound at residue arginine 20. 4 residues coordinate sn-glycerol 3-phosphate: arginine 86, glutamate 87, tyrosine 138, and aspartate 247. Glycerol-binding residues include arginine 86, glutamate 87, tyrosine 138, aspartate 247, and glutamine 248. ADP contacts are provided by threonine 269 and glycine 316. Positions 269, 316, 320, and 417 each coordinate ATP. ADP is bound by residues glycine 417 and asparagine 421.

It belongs to the FGGY kinase family.

It catalyses the reaction glycerol + ATP = sn-glycerol 3-phosphate + ADP + H(+). Its pathway is polyol metabolism; glycerol degradation via glycerol kinase pathway; sn-glycerol 3-phosphate from glycerol: step 1/1. With respect to regulation, inhibited by fructose 1,6-bisphosphate (FBP). Its function is as follows. Key enzyme in the regulation of glycerol uptake and metabolism. Catalyzes the phosphorylation of glycerol to yield sn-glycerol 3-phosphate. This chain is Glycerol kinase, found in Trichodesmium erythraeum (strain IMS101).